The following is a 442-amino-acid chain: Protein PHYTOCHROME KINASE SUBSTRATE 2 (442 aa).

The disordered stretch occupies residues 110-130 (IFVGPKQSSKNSSETPSLRSE). A compositionally biased stretch (low complexity) spans 121–130 (SSETPSLRSE). Ser-239 and Ser-245 each carry phosphoserine. Residues 394-442 (VSGDSYTSMNRTPSYVPRFPVEANPTSTETRRRISSSSVSHTQSPFLYT) are disordered. Polar residues predominate over residues 397 to 406 (DSYTSMNRTP). The segment covering 428 to 442 (SSSSVSHTQSPFLYT) has biased composition (low complexity).

Belongs to the PKS family. As to quaternary structure, interacts with PKS1, RPT3, PHOT1 and PHOT2. Expressed in leaves, with the strongest expression on edges of the laminas. Not found in roots.

It is found in the cell membrane. In terms of biological role, acts predominantly in the phot1 pathway. Involved in the leaf positioning and also in the phot2 pathway controlling the leaf flattening. Component of the network that modulates the very low-fluence response (VLFR) branch of phyA signaling. Regulates phytochrome-mediated photomorphogenesis and hypocotyl phototropism. May act by controlling auxin homeostasis. The sequence is that of Protein PHYTOCHROME KINASE SUBSTRATE 2 (PKS2) from Arabidopsis thaliana (Mouse-ear cress).